A 272-amino-acid polypeptide reads, in one-letter code: 3-methyl-2-oxobutanoate hydroxymethyltransferase (272 aa).

Residues D42 and D86 each coordinate Mg(2+). Residues 42-43 (DS), D86, and K116 each bind 3-methyl-2-oxobutanoate. A Mg(2+)-binding site is contributed by E118. E185 serves as the catalytic Proton acceptor.

Belongs to the PanB family. As to quaternary structure, homodecamer; pentamer of dimers. Mg(2+) serves as cofactor.

It is found in the cytoplasm. It carries out the reaction 3-methyl-2-oxobutanoate + (6R)-5,10-methylene-5,6,7,8-tetrahydrofolate + H2O = 2-dehydropantoate + (6S)-5,6,7,8-tetrahydrofolate. The protein operates within cofactor biosynthesis; (R)-pantothenate biosynthesis; (R)-pantoate from 3-methyl-2-oxobutanoate: step 1/2. Functionally, catalyzes the reversible reaction in which hydroxymethyl group from 5,10-methylenetetrahydrofolate is transferred onto alpha-ketoisovalerate to form ketopantoate. The chain is 3-methyl-2-oxobutanoate hydroxymethyltransferase from Prochlorococcus marinus (strain MIT 9313).